We begin with the raw amino-acid sequence, 236 residues long: B-cell antigen receptor complex-associated protein alpha chain (236 aa).

The first 32 residues, Met-1–Ala-32, serve as a signal peptide directing secretion. The region spanning Leu-33–Ser-122 is the Ig-like C2-type domain. At Leu-33–Asn-151 the chain is on the extracellular side. The cysteines at positions 54 and 109 are disulfide-linked. Residues Asn-66 and Asn-76 are each glycosylated (N-linked (GlcNAc...) asparagine). The chain crosses the membrane as a helical span at residues Ile-152–Leu-172. Over Phe-173–Pro-236 the chain is Cytoplasmic. An ITAM domain is found at Asp-185–Gly-213. Tyr-196 bears the Phosphotyrosine; by SRC-type Tyr-kinases mark. Position 207 is a phosphotyrosine (Tyr-207). Arg-212 bears the Asymmetric dimethylarginine; by PRMT1 mark. Tyr-218 carries the post-translational modification Phosphotyrosine; by Tyr-kinases.

As to quaternary structure, heterodimer of alpha and beta chains; disulfide-linked. Part of the B-cell antigen receptor complex where the alpha/beta chain heterodimer is non-covalently associated with an antigen-specific membrane-bound surface immunoglobulin of two heavy chains and two light chains. Interacts through its phosphorylated ITAM domain with the SH2 domains of SYK which stimulates SYK autophosphorylation and activation. Also interacts, when phosphorylated on Tyr-207, with the SH2 domain of BLNK/SLP65, bringing BLNK into proximity with SYK and allowing SYK to phosphorylate BLNK which is necessary for trafficking of the BCR to late endosomes. Interacts with Src-family tyrosine kinases including FYN and LYN, increasing their activity. In terms of processing, phosphorylated on tyrosine, serine and threonine residues upon B-cell activation. Phosphorylation of tyrosine residues by Src-family kinases, including LYN, is an early and essential feature of the BCR signaling cascade. The phosphorylated tyrosines serve as docking sites for SH2-domain containing kinases, leading to their activation which in turn leads to phosphorylation of downstream targets. Phosphorylation of serine and threonine residues may prevent subsequent tyrosine phosphorylation. Post-translationally, arginine methylation in the ITAM domain may interfere with the binding of SYK. It promotes signals leading to B-cell differentiation.

It localises to the cell membrane. Functionally, required in cooperation with CD79B for initiation of the signal transduction cascade activated by binding of antigen to the B-cell antigen receptor complex (BCR) which leads to internalization of the complex, trafficking to late endosomes and antigen presentation. Also required for BCR surface expression and for efficient differentiation of pro- and pre-B-cells. Stimulates SYK autophosphorylation and activation. Binds to BLNK, bringing BLNK into proximity with SYK and allowing SYK to phosphorylate BLNK. Also interacts with and increases activity of some Src-family tyrosine kinases. Represses BCR signaling during development of immature B-cells. This chain is B-cell antigen receptor complex-associated protein alpha chain (CD79A), found in Canis lupus familiaris (Dog).